The sequence spans 305 residues: GMP synthase [glutamine-hydrolyzing] subunit B (305 aa).

One can recognise a GMPS ATP-PPase domain in the interval Val2–Arg184. An ATP-binding site is contributed by Ser29 to Ser35.

Heterodimer composed of a glutamine amidotransferase subunit (A) and a GMP-binding subunit (B).

It catalyses the reaction XMP + L-glutamine + ATP + H2O = GMP + L-glutamate + AMP + diphosphate + 2 H(+). It functions in the pathway purine metabolism; GMP biosynthesis; GMP from XMP (L-Gln route): step 1/1. In terms of biological role, catalyzes the synthesis of GMP from XMP. The protein is GMP synthase [glutamine-hydrolyzing] subunit B of Methanosarcina barkeri (strain Fusaro / DSM 804).